Here is a 624-residue protein sequence, read N- to C-terminus: Chaperone protein HtpG (624 aa).

Residues 1–336 (MKGQETRGFQ…SSDLPLNVSR (336 aa)) are a; substrate-binding. Residues 337–552 (EILQDSTVTR…ADEMSTQMAK (216 aa)) form a b region. Residues 553–624 (LFAAAGQKVP…IRRMNQLLVS (72 aa)) form a c region.

Belongs to the heat shock protein 90 family. As to quaternary structure, homodimer.

The protein localises to the cytoplasm. Molecular chaperone. Has ATPase activity. The sequence is that of Chaperone protein HtpG from Escherichia coli O1:K1 / APEC.